The chain runs to 1273 residues: Cullin-associated NEDD8-dissociated protein 2 (1273 aa).

Ser2 bears the N-acetylserine mark. 26 HEAT repeats span residues 2-36 (STGA…LDPL), 37-74 (PWLQ…ELQK), 82-119 (DSER…KVKE), 121-157 (QVEN…ELPP), 167-205 (SVCR…RLGA), 209-246 (TFHA…ACST), 248-284 (LFVE…SVGR), 292-329 (AHLD…KCPK), 364-405 (TEDS…SRPD), 409-446 (DFHC…HTRP), 469-506 (AQVP…VLPG), 554-591 (PHLP…TLWP), 602-641 (PYVG…HLGD), 685-722 (PILA…SQGL), 727-764 (PAVR…TQPA), 768-807 (EVSG…TRPP), 809-850 (VEYS…ALSA), 894-931 (GPQR…GNLP), 933-968 (FLPF…DNLK), 970-1003 (YVED…LVFV), 1004-1040 (NPPF…DQPH), 1044-1081 (PLLK…NKPS), 1085-1121 (DLLD…DDGL), 1142-1178 (LDIC…LCPA), 1194-1231 (TCTA…NPEV), and 1241-1273 (STQI…MELS). Positions 352–383 (YNHDSDEEEQMETEDSEFSEQESEDEYSDDDD) are disordered. Acidic residues predominate over residues 356 to 383 (SDEEEQMETEDSEFSEQESEDEYSDDDD).

The protein belongs to the CAND family. In terms of assembly, binds TBP, CNOT3 and UBE3C. In terms of processing, ubiquitinated and targeted for proteasomal degradation. As to expression, detected in heart and skeletal muscle.

The protein resides in the nucleus. Its function is as follows. Probable assembly factor of SCF (SKP1-CUL1-F-box protein) E3 ubiquitin ligase complexes that promotes the exchange of the substrate-recognition F-box subunit in SCF complexes, thereby playing a key role in the cellular repertoire of SCF complexes. The protein is Cullin-associated NEDD8-dissociated protein 2 (Cand2) of Rattus norvegicus (Rat).